Reading from the N-terminus, the 141-residue chain is uncharacterized protein (141 aa).

It belongs to the PhzA/PhzB family.

This is an uncharacterized protein from Pseudomonas aeruginosa (strain ATCC 15692 / DSM 22644 / CIP 104116 / JCM 14847 / LMG 12228 / 1C / PRS 101 / PAO1).